The sequence spans 158 residues: Trafficking protein particle complex subunit 6B (158 aa).

Belongs to the TRAPP small subunits family. BET3 subfamily. Homodimer. Part of a TRAPP complex. Heterodimer with TRAPPC3. The heterodimer TRAPPC6B-TRAPPC3 interacts with TRAPPC1 likely providing a core for TRAPP complex formation.

It localises to the golgi apparatus. The protein localises to the cis-Golgi network. It is found in the endoplasmic reticulum. Its function is as follows. Component of a transport protein particle (TRAPP) complex that may function in specific stages of inter-organelle traffic. Specifically involved in the early development of neural circuitry, likely by controlling the frequency and amplitude of intracellular calcium transients implicated in the regulation of neuron differentiation and survival. The polypeptide is Trafficking protein particle complex subunit 6B (Bos taurus (Bovine)).